The primary structure comprises 281 residues: DegV domain-containing protein CPE2509 (281 aa).

The DegV domain occupies 4 to 279 (IAIITDSSCD…PGMVGVSIQK (276 aa)). Hexadecanoate contacts are provided by threonine 60 and serine 93.

May bind long-chain fatty acids, such as palmitate, and may play a role in lipid transport or fatty acid metabolism. In Clostridium perfringens (strain 13 / Type A), this protein is DegV domain-containing protein CPE2509.